The chain runs to 537 residues: tRNA(His) guanylyltransferase 2 (537 aa).

Residues Asp307, Gly308, and Asp354 each contribute to the Mg(2+) site. GTP-binding positions include 307-312 and 353-354; these read DGCHFH and SD.

The protein belongs to the tRNA(His) guanylyltransferase family. Mg(2+) serves as cofactor.

Its subcellular location is the nucleus. It localises to the nucleoplasm. It catalyses the reaction a 5'-end ribonucleotide-tRNA(His) + GTP + ATP + H2O = a 5'-end phospho-guanosine-ribonucleotide-tRNA(His) + AMP + 2 diphosphate + H(+). Adds a GMP to the 5'-end of tRNA(His) after transcription and RNase P cleavage. The protein is tRNA(His) guanylyltransferase 2 (THG2) of Arabidopsis thaliana (Mouse-ear cress).